Reading from the N-terminus, the 824-residue chain is Mucosa-associated lymphoid tissue lymphoma translocation protein 1 (824 aa).

Residues 1–27 (MSLLGDPLQALPPSAAPTGPLLAPPAG) form a disordered region. An N-acetylserine modification is found at Ser2. Over residues 11–27 (LPPSAAPTGPLLAPPAG) the composition is skewed to low complexity. Residues 39-126 (RRLSELLDQA…EVLQLLSPPG (88 aa)) form the Death domain. Ig-like C2-type domains lie at 125–201 (PGIK…FEFS) and 212–305 (PESF…KKVE). Ser135 carries the phosphoserine modification. Intrachain disulfides connect Cys147-Cys190 and Cys248-Cys290. The segment at 348–562 (IGNMNYREHP…SLSEKRALTD (215 aa)) is caspase-like. The Nuclear export signal signature appears at 369–376 (LTNLLRQL). Catalysis depends on residues His415 and Cys464.

It belongs to the peptidase C14B family. As to quaternary structure, homooligomer; forms oligomers which bind to TRAF6. Forms a complex with CARD14 and MALT1; resulting in the formation of a CBM (CARD14-BCL10-MALT1) complex. Forms a complex with CARD11 and MALT1; resulting in the formation of a CBM (CARD11-BCL10-MALT1) complex. Forms a complex with CARD9 and MALT1; resulting in the formation of a CBM (CARD9-BCL10-MALT1) complex. As to expression, highly expressed in peripheral blood mononuclear cells. Detected at lower levels in bone marrow, thymus and lymph node, and at very low levels in colon and lung.

It is found in the cytoplasm. The protein localises to the perinuclear region. It localises to the nucleus. Functionally, protease that enhances BCL10-induced activation: acts via formation of CBM complexes that channel adaptive and innate immune signaling downstream of CARD domain-containing proteins (CARD9, CARD11 and CARD14) to activate NF-kappa-B and MAP kinase p38 pathways which stimulate expression of genes encoding pro-inflammatory cytokines and chemokines. Mediates BCL10 cleavage: MALT1-dependent BCL10 cleavage plays an important role in T-cell antigen receptor-induced integrin adhesion. Involved in the induction of T helper 17 cells (Th17) differentiation. Cleaves RC3H1 and ZC3H12A in response to T-cell receptor (TCR) stimulation which releases their cooperatively repressed targets to promote Th17 cell differentiation. Also mediates cleavage of N4BP1 in T-cells following TCR-mediated activation, leading to N4BP1 inactivation. May also have ubiquitin ligase activity: binds to TRAF6, inducing TRAF6 oligomerization and activation of its ligase activity. The protein is Mucosa-associated lymphoid tissue lymphoma translocation protein 1 of Homo sapiens (Human).